A 336-amino-acid chain; its full sequence is Aspartate carbamoyltransferase catalytic subunit (336 aa).

Arginine 72 and threonine 73 together coordinate carbamoyl phosphate. Lysine 100 provides a ligand contact to L-aspartate. 3 residues coordinate carbamoyl phosphate: arginine 122, histidine 152, and glutamine 155. Positions 185 and 240 each coordinate L-aspartate. Residues glycine 281 and proline 282 each coordinate carbamoyl phosphate.

The protein belongs to the aspartate/ornithine carbamoyltransferase superfamily. ATCase family. As to quaternary structure, heterododecamer (2C3:3R2) of six catalytic PyrB chains organized as two trimers (C3), and six regulatory PyrI chains organized as three dimers (R2).

It carries out the reaction carbamoyl phosphate + L-aspartate = N-carbamoyl-L-aspartate + phosphate + H(+). It functions in the pathway pyrimidine metabolism; UMP biosynthesis via de novo pathway; (S)-dihydroorotate from bicarbonate: step 2/3. Functionally, catalyzes the condensation of carbamoyl phosphate and aspartate to form carbamoyl aspartate and inorganic phosphate, the committed step in the de novo pyrimidine nucleotide biosynthesis pathway. The polypeptide is Aspartate carbamoyltransferase catalytic subunit (Marinobacter nauticus (strain ATCC 700491 / DSM 11845 / VT8) (Marinobacter aquaeolei)).